A 569-amino-acid chain; its full sequence is GATOR1 complex protein NPRL3 (569 aa).

2 disordered regions span residues 27 to 60 and 416 to 477; these read PFQR…EQDG and PSEE…GDSP. Composition is skewed to polar residues over residues 34–52 and 438–468; these read HPAS…SNTG and SLST…NSSA. Position 476 is a phosphoserine (S476).

It belongs to the NPR3 family. In terms of assembly, within the GATOR complex, component of the GATOR1 subcomplex, made of DEPDC5, NPRL2 and NPRL3. GATOR1 mediates the strong interaction of the GATOR complex with small GTPases Rag (RagA/RRAGA, RagB/RRAGB, RagC/RRAGC and/or RagD/RRAGD) heterodimers. GATOR1 interacts with GPR155/LYCHOS; interaction takes place in presence of cholesterol and prevents interaction between GATOR1 and KICSTOR. As to expression, widely expressed. Expressed in the frontal lobe cortex as well as in the temporal, parietal, and occipital lobes.

It is found in the lysosome membrane. In terms of biological role, as a component of the GATOR1 complex functions as an inhibitor of the amino acid-sensing branch of the mTORC1 pathway. In response to amino acid depletion, the GATOR1 complex has GTPase activating protein (GAP) activity and strongly increases GTP hydrolysis by RagA/RRAGA (or RagB/RRAGB) within heterodimeric Rag complexes, thereby turning them into their inactive GDP-bound form, releasing mTORC1 from lysosomal surface and inhibiting mTORC1 signaling. In the presence of abundant amino acids, the GATOR1 complex is negatively regulated by GATOR2, the other GATOR subcomplex, in this amino acid-sensing branch of the TORC1 pathway. The polypeptide is GATOR1 complex protein NPRL3 (Homo sapiens (Human)).